A 371-amino-acid polypeptide reads, in one-letter code: Probable inactive methyltransferase Os04g0175900 (371 aa).

137 to 143 lines the substrate pocket; the sequence is LDVDEDN. A substrate binding region spans residues 170 to 188; it reads LFEYMGTNHRFNMLFNQAM. S-adenosyl-L-methionine contacts are provided by G216, D239, M260, and K273.

This sequence belongs to the class I-like SAM-binding methyltransferase superfamily. Cation-independent O-methyltransferase family. COMT subfamily.

This Oryza sativa subsp. japonica (Rice) protein is Probable inactive methyltransferase Os04g0175900.